The following is a 316-amino-acid chain: Porphobilinogen deaminase (316 aa).

An S-(dipyrrolylmethanemethyl)cysteine modification is found at Cys249.

Belongs to the HMBS family. As to quaternary structure, monomer. It depends on dipyrromethane as a cofactor.

It catalyses the reaction 4 porphobilinogen + H2O = hydroxymethylbilane + 4 NH4(+). It functions in the pathway porphyrin-containing compound metabolism; protoporphyrin-IX biosynthesis; coproporphyrinogen-III from 5-aminolevulinate: step 2/4. Its function is as follows. Tetrapolymerization of the monopyrrole PBG into the hydroxymethylbilane pre-uroporphyrinogen in several discrete steps. The chain is Porphobilinogen deaminase from Nitrobacter hamburgensis (strain DSM 10229 / NCIMB 13809 / X14).